We begin with the raw amino-acid sequence, 85 residues long: Sec-independent protein translocase protein TatA (85 aa).

The helical transmembrane segment at 1–21 (MGSFSIWHWLIVLVIIMMVFG) threads the bilayer. The span at 39–51 (FKDGMREGQEDKP) shows a compositional bias: basic and acidic residues. Residues 39-85 (FKDGMREGQEDKPAGSQQPQQTAGQPPRELHDATTIDVEARDKSKQG) are disordered. Polar residues predominate over residues 53 to 62 (GSQQPQQTAG). Positions 66–85 (RELHDATTIDVEARDKSKQG) are enriched in basic and acidic residues.

It belongs to the TatA/E family. The Tat system comprises two distinct complexes: a TatABC complex, containing multiple copies of TatA, TatB and TatC subunits, and a separate TatA complex, containing only TatA subunits. Substrates initially bind to the TatABC complex, which probably triggers association of the separate TatA complex to form the active translocon.

Its subcellular location is the cell inner membrane. Functionally, part of the twin-arginine translocation (Tat) system that transports large folded proteins containing a characteristic twin-arginine motif in their signal peptide across membranes. TatA could form the protein-conducting channel of the Tat system. In Ralstonia pickettii (strain 12J), this protein is Sec-independent protein translocase protein TatA.